The primary structure comprises 212 residues: Adenylate kinase (212 aa).

10–15 (GAGKGT) contacts ATP. The interval 30–59 (STGDMFRAAMANQTEMGVLAKSYIDKGELV) is NMP. Residues Thr31, Arg36, 57–59 (ELV), 86–89 (GYPR), and Gln93 contribute to the AMP site. Residues 127–159 (GRIIHRVTGETFHKVFNPPVDYKEEDYYQREDD) are LID. Residues Arg128 and 137 to 138 (TF) contribute to the ATP site. AMP is bound by residues Arg156 and Arg167. An ATP-binding site is contributed by Gln195.

This sequence belongs to the adenylate kinase family. In terms of assembly, monomer.

The protein localises to the cytoplasm. The enzyme catalyses AMP + ATP = 2 ADP. It functions in the pathway purine metabolism; AMP biosynthesis via salvage pathway; AMP from ADP: step 1/1. Catalyzes the reversible transfer of the terminal phosphate group between ATP and AMP. Plays an important role in cellular energy homeostasis and in adenine nucleotide metabolism. The polypeptide is Adenylate kinase (Streptococcus pneumoniae serotype 4 (strain ATCC BAA-334 / TIGR4)).